Consider the following 417-residue polypeptide: Ribulose bisphosphate carboxylase large chain (417 aa).

Residues Asn103 and Thr153 each coordinate substrate. Lys155 (proton acceptor) is an active-site residue. Substrate is bound at residue Lys157. Residues Lys181, Asp183, and Glu184 each contribute to the Mg(2+) site. The residue at position 181 (Lys181) is an N6-carboxylysine. His274 (proton acceptor) is an active-site residue. Substrate is bound by residues Arg275, His307, and Ser359.

This sequence belongs to the RuBisCO large chain family. Type I subfamily. Heterohexadecamer of 8 large chains and 8 small chains. Mg(2+) serves as cofactor.

The protein resides in the plastid. It localises to the chloroplast. It carries out the reaction 2 (2R)-3-phosphoglycerate + 2 H(+) = D-ribulose 1,5-bisphosphate + CO2 + H2O. It catalyses the reaction D-ribulose 1,5-bisphosphate + O2 = 2-phosphoglycolate + (2R)-3-phosphoglycerate + 2 H(+). In terms of biological role, ruBisCO catalyzes two reactions: the carboxylation of D-ribulose 1,5-bisphosphate, the primary event in carbon dioxide fixation, as well as the oxidative fragmentation of the pentose substrate in the photorespiration process. Both reactions occur simultaneously and in competition at the same active site. In Acrostichum aureum (Golden leather fern), this protein is Ribulose bisphosphate carboxylase large chain.